Consider the following 500-residue polypeptide: Catalase (500 aa).

Catalysis depends on residues H59 and N131. Y339 provides a ligand contact to heme.

It belongs to the catalase family. It depends on heme as a cofactor.

It catalyses the reaction 2 H2O2 = O2 + 2 H2O. In terms of biological role, decomposes hydrogen peroxide into water and oxygen; serves to protect cells from the toxic effects of hydrogen peroxide. The chain is Catalase (katA) from Neisseria gonorrhoeae.